A 276-amino-acid polypeptide reads, in one-letter code: Diaminopimelate epimerase (276 aa).

3 residues coordinate substrate: N13, Q46, and N66. The Proton donor role is filled by C75. Substrate is bound by residues 76–77, N159, N192, and 210–211; these read GN and ER. The Proton acceptor role is filled by C219. 220–221 contributes to the substrate binding site; it reads GT.

Belongs to the diaminopimelate epimerase family. Homodimer.

It is found in the cytoplasm. It carries out the reaction (2S,6S)-2,6-diaminopimelate = meso-2,6-diaminopimelate. The protein operates within amino-acid biosynthesis; L-lysine biosynthesis via DAP pathway; DL-2,6-diaminopimelate from LL-2,6-diaminopimelate: step 1/1. Catalyzes the stereoinversion of LL-2,6-diaminopimelate (L,L-DAP) to meso-diaminopimelate (meso-DAP), a precursor of L-lysine and an essential component of the bacterial peptidoglycan. The sequence is that of Diaminopimelate epimerase from Pseudomonas aeruginosa (strain LESB58).